Here is a 315-residue protein sequence, read N- to C-terminus: Shiga toxin subunit A (315 aa).

The signal sequence occupies residues 1-22 (MKIIIFRVLTFFFVIFSVNVVA). The A1 stretch occupies residues 23-273 (KEFTLDFSTA…CHHHASRVAR (251 aa)). The active site involves Glu189. Cys264 and Cys283 are disulfide-bonded. Residues 274-315 (MASDEFPSMCPADGRVRGITHNKILWDSSTLGAILMRRTISS) form an A2 region.

Belongs to the ribosome-inactivating protein family. Shiga toxin contains a single subunit A and five copies of subunit B.

The catalysed reaction is Endohydrolysis of the N-glycosidic bond at one specific adenosine on the 28S rRNA.. The A subunit is responsible for inhibiting protein synthesis through the catalytic inactivation of 60S ribosomal subunits. After endocytosis, the A subunit is cleaved by furin in two fragments, A1 and A2: A1 is the catalytically active fragment, and A2 is essential for holotoxin assembly with the B subunits. In Shigella sonnei (Shigella sonnei bacteriophage 7888), this protein is Shiga toxin subunit A (stxA).